A 343-amino-acid chain; its full sequence is Holliday junction branch migration complex subunit RuvB (343 aa).

The tract at residues Met1 to Arg23 is disordered. Residues Met1–Tyr183 form a large ATPase domain (RuvB-L) region. ATP-binding positions include Leu22, Arg23, Gly64, Lys67, Thr68, Thr69, Glu130–Tyr132, Arg173, Tyr183, and Arg220. Thr68 contacts Mg(2+). Residues Ser184–Asn254 are small ATPAse domain (RuvB-S). Positions Gly257–Asp343 are head domain (RuvB-H). Positions 312 and 317 each coordinate DNA.

The protein belongs to the RuvB family. In terms of assembly, homohexamer. Forms an RuvA(8)-RuvB(12)-Holliday junction (HJ) complex. HJ DNA is sandwiched between 2 RuvA tetramers; dsDNA enters through RuvA and exits via RuvB. An RuvB hexamer assembles on each DNA strand where it exits the tetramer. Each RuvB hexamer is contacted by two RuvA subunits (via domain III) on 2 adjacent RuvB subunits; this complex drives branch migration. In the full resolvosome a probable DNA-RuvA(4)-RuvB(12)-RuvC(2) complex forms which resolves the HJ.

Its subcellular location is the cytoplasm. The catalysed reaction is ATP + H2O = ADP + phosphate + H(+). Functionally, the RuvA-RuvB-RuvC complex processes Holliday junction (HJ) DNA during genetic recombination and DNA repair, while the RuvA-RuvB complex plays an important role in the rescue of blocked DNA replication forks via replication fork reversal (RFR). RuvA specifically binds to HJ cruciform DNA, conferring on it an open structure. The RuvB hexamer acts as an ATP-dependent pump, pulling dsDNA into and through the RuvAB complex. RuvB forms 2 homohexamers on either side of HJ DNA bound by 1 or 2 RuvA tetramers; 4 subunits per hexamer contact DNA at a time. Coordinated motions by a converter formed by DNA-disengaged RuvB subunits stimulates ATP hydrolysis and nucleotide exchange. Immobilization of the converter enables RuvB to convert the ATP-contained energy into a lever motion, pulling 2 nucleotides of DNA out of the RuvA tetramer per ATP hydrolyzed, thus driving DNA branch migration. The RuvB motors rotate together with the DNA substrate, which together with the progressing nucleotide cycle form the mechanistic basis for DNA recombination by continuous HJ branch migration. Branch migration allows RuvC to scan DNA until it finds its consensus sequence, where it cleaves and resolves cruciform DNA. The chain is Holliday junction branch migration complex subunit RuvB from Treponema denticola (strain ATCC 35405 / DSM 14222 / CIP 103919 / JCM 8153 / KCTC 15104).